We begin with the raw amino-acid sequence, 124 residues long: Large ribosomal subunit protein bL21 (124 aa).

Belongs to the bacterial ribosomal protein bL21 family. As to quaternary structure, part of the 50S ribosomal subunit. Contacts protein L20.

In terms of biological role, this protein binds to 23S rRNA in the presence of protein L20. This is Large ribosomal subunit protein bL21 from Sinorhizobium medicae (strain WSM419) (Ensifer medicae).